The chain runs to 468 residues: tRNA modification GTPase MnmE (468 aa).

The (6S)-5-formyl-5,6,7,8-tetrahydrofolate site is built by Arg-29, Glu-97, and Lys-136. The TrmE-type G domain maps to 232–390 (GFELAIVGRP…VVAHIVARME (159 aa)). Asn-242 contacts K(+). GTP contacts are provided by residues 242-247 (NVGKSS), 261-267 (TDLAGTT), and 286-289 (DTAG). Ser-246 contributes to the Mg(2+) binding site. Residues Thr-261, Leu-263, and Thr-266 each coordinate K(+). Thr-267 lines the Mg(2+) pocket. Lys-468 lines the (6S)-5-formyl-5,6,7,8-tetrahydrofolate pocket.

This sequence belongs to the TRAFAC class TrmE-Era-EngA-EngB-Septin-like GTPase superfamily. TrmE GTPase family. As to quaternary structure, homodimer. Heterotetramer of two MnmE and two MnmG subunits. The cofactor is K(+).

Its subcellular location is the cytoplasm. Functionally, exhibits a very high intrinsic GTPase hydrolysis rate. Involved in the addition of a carboxymethylaminomethyl (cmnm) group at the wobble position (U34) of certain tRNAs, forming tRNA-cmnm(5)s(2)U34. This Magnetococcus marinus (strain ATCC BAA-1437 / JCM 17883 / MC-1) protein is tRNA modification GTPase MnmE.